The primary structure comprises 723 residues: tRNA (guanine(27)-N(2))-dimethyltransferase (723 aa).

Residues 1–10 show a composition bias toward acidic residues; that stretch reads MENMAEEELL. The disordered stretch occupies residues 1-72; that stretch reads MENMAEEELL…SLASVPEEAE (72 aa). Phosphothreonine is present on Thr23. A compositionally biased stretch (low complexity) spans 32–44; sequence PAADTALDSAPTP. Over residues 45 to 59 the composition is skewed to pro residues; it reads DSAPAPALAPAPAPA. Ser61 is subject to Phosphoserine. Residues 128 to 132 carry the Nucleolar localization signal motif; the sequence is HKLRR. A C2H2-type zinc finger spans residues 177-199; sequence YHCIICSATITRRTDMLGHVKRH. In terms of domain architecture, Trm1 methyltransferase spans 220–679; the sequence is EVLKETDTDI…ASLTQFKSIL (460 aa). S-adenosyl-L-methionine is bound by residues Arg253, Asp300, Asp348, and Ala349. The Zn(2+) site is built by Cys479, Cys482, Cys504, and Cys506. A Glycyl lysine isopeptide (Lys-Gly) (interchain with G-Cter in SUMO2) cross-link involves residue Lys576. Ser603 is modified (phosphoserine).

The protein belongs to the class I-like SAM-binding methyltransferase superfamily. Trm1 family.

The protein resides in the nucleus. The protein localises to the nucleolus. The enzyme catalyses guanosine(27) in tRNA(Tyr) + 2 S-adenosyl-L-methionine = N(2)-dimethylguanosine(27) in tRNA(Tyr) + 2 S-adenosyl-L-homocysteine + 2 H(+). Its function is as follows. Specifically dimethylates a single guanine residue at position 27 of tRNA(Tyr) using S-adenosyl-L-methionine as donor of the methyl groups. Dimethylation at position 27 of tRNA(Tyr) is required for efficient translation of tyrosine codons. Also required to maintain 3-(3-amino-3-carboxypropyl)uridine (acp3U) in the D-loop of several cytoplasmic tRNAs. In Rattus norvegicus (Rat), this protein is tRNA (guanine(27)-N(2))-dimethyltransferase.